A 194-amino-acid chain; its full sequence is Molybdenum cofactor guanylyltransferase (194 aa).

GTP contacts are provided by residues 12–14, K25, N53, D70, and D100; that span reads LAG. D100 serves as a coordination point for Mg(2+).

Belongs to the MobA family. As to quaternary structure, monomer. Requires Mg(2+) as cofactor.

It localises to the cytoplasm. The enzyme catalyses Mo-molybdopterin + GTP + H(+) = Mo-molybdopterin guanine dinucleotide + diphosphate. Its function is as follows. Transfers a GMP moiety from GTP to Mo-molybdopterin (Mo-MPT) cofactor (Moco or molybdenum cofactor) to form Mo-molybdopterin guanine dinucleotide (Mo-MGD) cofactor. The polypeptide is Molybdenum cofactor guanylyltransferase (Aliivibrio fischeri (strain ATCC 700601 / ES114) (Vibrio fischeri)).